We begin with the raw amino-acid sequence, 75 residues long: ATP synthase subunit c (75 aa).

A run of 2 helical transmembrane segments spans residues 9-29 and 54-74; these read IGAG…GIIF and FALA…ILFA.

It belongs to the ATPase C chain family. F-type ATPases have 2 components, F(1) - the catalytic core - and F(0) - the membrane proton channel. F(1) has five subunits: alpha(3), beta(3), gamma(1), delta(1), epsilon(1). F(0) has three main subunits: a(1), b(2) and c(10-14). The alpha and beta chains form an alternating ring which encloses part of the gamma chain. F(1) is attached to F(0) by a central stalk formed by the gamma and epsilon chains, while a peripheral stalk is formed by the delta and b chains.

It is found in the cell inner membrane. Functionally, f(1)F(0) ATP synthase produces ATP from ADP in the presence of a proton or sodium gradient. F-type ATPases consist of two structural domains, F(1) containing the extramembraneous catalytic core and F(0) containing the membrane proton channel, linked together by a central stalk and a peripheral stalk. During catalysis, ATP synthesis in the catalytic domain of F(1) is coupled via a rotary mechanism of the central stalk subunits to proton translocation. In terms of biological role, key component of the F(0) channel; it plays a direct role in translocation across the membrane. A homomeric c-ring of between 10-14 subunits forms the central stalk rotor element with the F(1) delta and epsilon subunits. This chain is ATP synthase subunit c, found in Pelagibacter ubique (strain HTCC1062).